Reading from the N-terminus, the 645-residue chain is UPF0313 protein CLB_0243 (645 aa).

The Radical SAM core domain occupies 295–566 (AIKEVKFSIT…RMQRALLQFS (272 aa)). Residues Cys309, Cys313, and Cys316 each coordinate [4Fe-4S] cluster. Residues 598–645 (NKPYKKSHKKNNAKNNNNHYNKNNNYNKNKDISKKNKKNSLSKHKKRK) are disordered. The span at 600–609 (PYKKSHKKNN) shows a compositional bias: basic residues. Low complexity predominate over residues 610–624 (AKNNNNHYNKNNNYN). The span at 632-645 (KNKKNSLSKHKKRK) shows a compositional bias: basic residues.

Belongs to the UPF0313 family. [4Fe-4S] cluster is required as a cofactor.

This chain is UPF0313 protein CLB_0243, found in Clostridium botulinum (strain ATCC 19397 / Type A).